The primary structure comprises 213 residues: TVP38/TMEM64 family membrane protein YtxB (213 aa).

A run of 6 helical transmembrane segments spans residues 9-29 (WLAV…YLNV), 34-54 (IRVW…GISI), 58-78 (LVLF…GPLL), 81-101 (LYTL…AGLF), 159-179 (AVGI…FLAG), and 181-201 (LPAF…PFIF).

Belongs to the TVP38/TMEM64 family.

The protein localises to the cell membrane. The sequence is that of TVP38/TMEM64 family membrane protein YtxB (ytxB) from Bacillus subtilis (strain 168).